Here is a 1007-residue protein sequence, read N- to C-terminus: METGAGPHPLRLFVCLIPLCLALLLGPGRPGTAEEVILLDSKASQAELGWTALPSTGWEEISGVDEHDRPIRTYQVCNVLEPNQDNWLQTGWISRGRGQRIFVELQFTLRDCSSIPGATGTCKETFNAYYLETETDLGRGRPRLGGNRPRKIDTIAADESFTQGDLGERKMKLNTEVREIGPLSRQGFHLAFQDVGACVALVSVRVYYKQCRATVRGLAAFPATAAESAFSTLVEVAGTCVAHSEGEPSSPPRMHCGADGEWLVPVGRCSCSAGFQEHGDICEACPPGFYKVSPRRPLCSPCPEHSLALENASTFCVCQDTYARSPTDPPSASCTRPPSAPRDLQYSLSRSPLALRLRWLPPADSGGRSDVTYSLLCLRCGRDGPAGACQPCGPRVAFVPRQAGLRERAATLLHLRPGARYTVRVAALNGVSGPAAAAGATYAQVTVSTGPGAPWEEDEIRRDRVEPQSVSLSWREPVPAGAPGTNSTEYEIRYYEKGQSEQTYSTVKTGAPAVTVTNLKPATRYVFQIRAASPGPLWEAQSFSPSIEVQTPGEVAPGSRDQSPAVVVTVVTISALLVLGSVMSVLAIWRRPCDGKGSGNAHDEEELYFHFKVPTRRTFLDPQSCGDPLQAVHLFAKELDAKSVTLEKSLGAGRFGTLCCGCLQLPGRQELPVAVHTLRDGCSDSQRLSFLAEALTLGQFDHSHIVRLEGVVTRGNPLMIVTEYMNLGALDDFLRHHEGELVAAQLMGLLPGLASAMKYLSEMGYVHRGLAARRVLVSSGLLCKISGFGRGPRDRAEAVYTTMSGRSPALWAAPETLQFGHFSSASDVWSFGIVMWEVMAFGERPYWDMSGQDVIKAVEDGFRLPPPRNCPSQLHRLMLECWQKDPSERPRFSQIHSILSKMGQEPEPSKCASTTCLRPPTPLADRAFSTFPSFGSVGAWLEALDLCRYKDNFSAAGYGSLEAVAEMTAQDLGSLGISSTEHRESLLSGISALQTRVLQLQGQGVQV.

The first 22 residues, Met-1–Ala-22, serve as a signal peptide directing secretion. At Leu-23–Ala-565 the chain is on the extracellular side. Residues Glu-35–Arg-216 form the Eph LBD domain. An N-linked (GlcNAc...) asparagine glycan is attached at Asn-311. Disordered stretches follow at residues Ala-323–Asp-343 and Pro-467–Asn-486. 2 Fibronectin type-III domains span residues Ala-340–Gly-452 and Glu-456–Glu-554. The N-linked (GlcNAc...) asparagine glycan is linked to Asn-486. A helical transmembrane segment spans residues Val-566 to Leu-586. Topologically, residues Ala-587–Val-1007 are cytoplasmic. The 256-residue stretch at Val-644–Leu-899 folds into the Protein kinase domain. The region spanning Pro-932 to Arg-996 is the SAM domain.

Belongs to the protein kinase superfamily. Tyr protein kinase family. Ephrin receptor subfamily. In terms of tissue distribution, expressed in the cochlea, in the organ of Corti, spiral ganglion, and stria vascularis.

Its subcellular location is the cell membrane. The enzyme catalyses L-tyrosyl-[protein] + ATP = O-phospho-L-tyrosyl-[protein] + ADP + H(+). Functionally, receptor for members of the ephrin-A family. Binds to EFNA3, EFNA4 and EFNA5. This chain is Ephrin type-A receptor 10 (Epha10), found in Mus musculus (Mouse).